The primary structure comprises 443 residues: Histidinol dehydrogenase (443 aa).

Residues Y141, Q203, and N226 each contribute to the NAD(+) site. 3 residues coordinate substrate: S249, Q271, and H274. 2 residues coordinate Zn(2+): Q271 and H274. Catalysis depends on proton acceptor residues E339 and H340. H340, D373, E427, and H432 together coordinate substrate. D373 is a Zn(2+) binding site. H432 provides a ligand contact to Zn(2+).

It belongs to the histidinol dehydrogenase family. Zn(2+) is required as a cofactor.

It catalyses the reaction L-histidinol + 2 NAD(+) + H2O = L-histidine + 2 NADH + 3 H(+). It functions in the pathway amino-acid biosynthesis; L-histidine biosynthesis; L-histidine from 5-phospho-alpha-D-ribose 1-diphosphate: step 9/9. In terms of biological role, catalyzes the sequential NAD-dependent oxidations of L-histidinol to L-histidinaldehyde and then to L-histidine. This is Histidinol dehydrogenase from Chlorobium luteolum (strain DSM 273 / BCRC 81028 / 2530) (Pelodictyon luteolum).